The following is a 212-amino-acid chain: Probable nicotinate-nucleotide adenylyltransferase (212 aa).

Belongs to the NadD family.

The catalysed reaction is nicotinate beta-D-ribonucleotide + ATP + H(+) = deamido-NAD(+) + diphosphate. Its pathway is cofactor biosynthesis; NAD(+) biosynthesis; deamido-NAD(+) from nicotinate D-ribonucleotide: step 1/1. Functionally, catalyzes the reversible adenylation of nicotinate mononucleotide (NaMN) to nicotinic acid adenine dinucleotide (NaAD). In Chromobacterium violaceum (strain ATCC 12472 / DSM 30191 / JCM 1249 / CCUG 213 / NBRC 12614 / NCIMB 9131 / NCTC 9757 / MK), this protein is Probable nicotinate-nucleotide adenylyltransferase.